We begin with the raw amino-acid sequence, 358 residues long: Branched-chain amino acid aminotransferase gloG (358 aa).

R91 is a binding site for pyridoxal 5'-phosphate. K195 (proton acceptor) is an active-site residue. At K195 the chain carries N6-(pyridoxal phosphate)lysine. E231 provides a ligand contact to pyridoxal 5'-phosphate.

It belongs to the class-IV pyridoxal-phosphate-dependent aminotransferase family. Requires pyridoxal 5'-phosphate as cofactor.

The catalysed reaction is L-isoleucine + 2-oxoglutarate = (S)-3-methyl-2-oxopentanoate + L-glutamate. It carries out the reaction L-leucine + 2-oxoglutarate = 4-methyl-2-oxopentanoate + L-glutamate. The enzyme catalyses L-valine + 2-oxoglutarate = 3-methyl-2-oxobutanoate + L-glutamate. It participates in mycotoxin biosynthesis. In terms of biological role, branched-chain amino acid aminotransferase; part of the gene cluster that mediates the biosynthesis of pneumocandins, lipohexapeptides of the echinocandin family that prevent fungal cell wall formation by non-competitive inhibition of beta-1,3-glucan synthase. The 10,12-dimethylmyristoyl side chain is synthesized by the reducing polyketide synthase gloL/GLPKS4. The thioesterase gloN/GLHYD exclusively interacts with gloL/GLPKS4 to maintain turnover of the polyketide side chain. The 10R,12S-dimethylmyristic acid is then transferred to the first thiolation domain of the nonribosomal peptide synthetase gloA/GLNRPS4 by the acyl-AMP ligase gloD/GLligase, followed by its acylation to L-ornithine to trigger elongation of the cyclic hexapeptide. L-ornithine, 4R-hydroxyl-L-proline (generated from L-proline by the dioxygenase gloF/GLOXY2), 3S-hydroxyl-L-homotyrosine (generated by gloG/GLHtyB, gloH/GLHtyA, gloI/GLHtyC, gloJ/GLHtyD and hydroxylated at C-3 by the dioxygenase gloM/GLOXY1), 3R-hydroxyl-L-glutamine (generated from L-glutamine probably by the dioxygenase gloE/GLOXY3) and 3S-hydroxyl-L-proline (generated from L-proline by the dioxygenase gloF/GLOXY2 to yield pneumocandin B0), or 3S-hydroxyl-4S-methyl-L-proline (generated from L-leucine by the dioxygenase gloC/GLOXY4 to yield pneumocandin A0) are sequentially added to the growing chain. The last C domain of gloA/GLNRPS4 is proposed to be responsible for cyclization by condensation to form the peptide bond between L-ornithine and 3S-hydroxyl-4S-methyl-L-proline (for pneumocandin A0) or 3S-hydroxyl-L-proline (for pneumocandin B0). Finally, the subsequent C-4 hydroxylation of 3S-hydroxyl-L-homotyrosine and L-ornithine dihydroxylation at C-4 and C-5 are performed by the cytochrome P450 monooxygenases gloP/GLP450-1 and gloO/GLP450-2, respectively. The polypeptide is Branched-chain amino acid aminotransferase gloG (Glarea lozoyensis (strain ATCC 20868 / MF5171)).